The chain runs to 75 residues: Small ribosomal subunit protein bS18c (75 aa).

Belongs to the bacterial ribosomal protein bS18 family. Part of the 30S ribosomal subunit.

The protein resides in the plastid. The chain is Small ribosomal subunit protein bS18c from Aneura mirabilis (Parasitic liverwort).